A 521-amino-acid polypeptide reads, in one-letter code: uncharacterized protein (521 aa).

An N-terminal signal peptide occupies residues 1–22 (MGFKLKGFGFLTLFASQAFLTA). A lipid anchor (N-palmitoyl cysteine) is attached at cysteine 23. A lipid anchor (S-diacylglycerol cysteine) is attached at cysteine 23.

The protein belongs to the MG067/MG068/MG395 family.

It localises to the cell membrane. This is an uncharacterized protein from Mycoplasma pneumoniae (strain ATCC 29342 / M129 / Subtype 1) (Mycoplasmoides pneumoniae).